The chain runs to 535 residues: Suppressor of cytokine signaling 6 (535 aa).

The span at Arg-80–Gly-89 shows a compositional bias: basic residues. The tract at residues Arg-80–Ser-105 is disordered. The region spanning Trp-384–Val-491 is the SH2 domain. The region spanning Arg-486–Tyr-535 is the SOCS box domain.

In terms of assembly, interacts with RBCK1. Interacts with phosphorylated IRS4. Interacts with PIM3. Interacts with KIT (phosphorylated).

It functions in the pathway protein modification; protein ubiquitination. Its function is as follows. SOCS family proteins form part of a classical negative feedback system that regulates cytokine signal transduction. May be a substrate recognition component of a SCF-like ECS (Elongin BC-CUL2/5-SOCS-box protein) E3 ubiquitin-protein ligase complex which mediates the ubiquitination and subsequent proteasomal degradation of target proteins. Regulates KIT degradation by ubiquitination of the tyrosine-phosphorylated receptor. This Homo sapiens (Human) protein is Suppressor of cytokine signaling 6 (SOCS6).